We begin with the raw amino-acid sequence, 331 residues long: Leucine-rich repeat-containing protein 26 (331 aa).

A signal peptide spans 1 to 26 (MRGSFFSRLPPQLSLLLLLSLRRVWT). The Extracellular segment spans residues 27–261 (QEDIGTAPSK…QCTQSLAARD (235 aa)). The LRRNT domain occupies 34 to 71 (PSKSPVAPECPEACSCSLGGKANCSALALPAVPADLSW). 2 disulfide bridges follow: Cys-43–Cys-49 and Cys-47–Cys-57. 5 LRR repeats span residues 72-93 (QVRSLLLDHNRVSALPPGAFAN), 96-117 (ALLYLDLRENRLRSVHARAFWG), 120-141 (VLQWLDLSSNQLETLPPGTFAP), 144-165 (ALSFLSLAGNRLALLEPSILGP), and 168-191 (LLRVLSLQDNSLSAIEAGLLNNLP). One can recognise an LRRCT domain in the interval 201-255 (NPWTCNCALRPLCTWLRKHPRPASETETLLCVSPRLQTLSLLTAFPDAAFKQCTQ). 2 cysteine pairs are disulfide-bonded: Cys-205–Cys-231 and Cys-207–Cys-253. Residues 262–282 (LAVVYALGPVSFLASLAICLA) form a helical membrane-spanning segment. The Cytoplasmic segment spans residues 283–331 (LGSVLTACGARRRRRRRTTVRHLLRRQLDPEGPPSLEDAGSPVTAAIQA). Residues 310–331 (LDPEGPPSLEDAGSPVTAAIQA) are disordered.

In terms of assembly, interacts with KCNMA1.

The protein resides in the cell membrane. It localises to the cytoplasm. Its subcellular location is the cytoskeleton. Its function is as follows. Auxiliary protein of the large-conductance, voltage and calcium-activated potassium channel (BK alpha). Required for the conversion of BK alpha channels from a high-voltage to a low-voltage activated channel type in non-excitable cells. These are characterized by negative membrane voltages and constant low levels of calcium. This chain is Leucine-rich repeat-containing protein 26 (Lrrc26), found in Mus musculus (Mouse).